The primary structure comprises 310 residues: Alpha/beta hydrolase domain-containing protein 17A (310 aa).

The interval 38 to 61 (VPEPEPGPGGAGAAPSGPLRTSAA) is disordered. Active-site charge relay system residues include S190, D255, and H284. A Phosphoserine modification is found at S307.

Belongs to the AB hydrolase superfamily. ABHD17 family. Palmitoylated on cysteine residues located in a cysteine cluster at the N-terminus which promotes membrane localization. Palmitoylation is required for post-synaptic localization and for depalmitoylating activity towards DLG4/PSD95. Expressed in brain (at protein level). Expressed in hippocampal neurons.

The protein resides in the cell membrane. Its subcellular location is the recycling endosome membrane. The protein localises to the cell projection. It is found in the dendritic spine. It localises to the postsynaptic density membrane. The catalysed reaction is S-hexadecanoyl-L-cysteinyl-[protein] + H2O = L-cysteinyl-[protein] + hexadecanoate + H(+). Functionally, hydrolyzes fatty acids from S-acylated cysteine residues in proteins. Has depalmitoylating activity towards NRAS. Has depalmitoylating activity towards DLG4/PSD95. May have depalmitoylating activity towards MAP6. The protein is Alpha/beta hydrolase domain-containing protein 17A of Rattus norvegicus (Rat).